The following is a 504-amino-acid chain: Glycerol kinase (504 aa).

ADP is bound at residue Thr13. Positions 13, 14, and 15 each coordinate ATP. Thr13 contributes to the sn-glycerol 3-phosphate binding site. ADP is bound at residue Arg17. Sn-glycerol 3-phosphate-binding residues include Arg83, Glu84, and Tyr135. 3 residues coordinate glycerol: Arg83, Glu84, and Tyr135. His231 bears the Phosphohistidine; by HPr mark. Asp245 is a binding site for sn-glycerol 3-phosphate. Residues Asp245 and Gln246 each coordinate glycerol. Residues Thr267 and Gly310 each coordinate ADP. Residues Thr267, Gly310, Gln314, and Gly411 each coordinate ATP. Positions 411 and 415 each coordinate ADP.

Belongs to the FGGY kinase family. As to quaternary structure, homotetramer and homodimer (in equilibrium). The phosphoenolpyruvate-dependent sugar phosphotransferase system (PTS), including enzyme I, and histidine-containing protein (HPr) are required for the phosphorylation, which leads to the activation of the enzyme.

The catalysed reaction is glycerol + ATP = sn-glycerol 3-phosphate + ADP + H(+). It participates in polyol metabolism; glycerol degradation via glycerol kinase pathway; sn-glycerol 3-phosphate from glycerol: step 1/1. Its activity is regulated as follows. Activated by phosphorylation and inhibited by fructose 1,6-bisphosphate (FBP). In terms of biological role, key enzyme in the regulation of glycerol uptake and metabolism. Catalyzes the phosphorylation of glycerol to yield sn-glycerol 3-phosphate. This chain is Glycerol kinase, found in Pediococcus pentosaceus (strain ATCC 25745 / CCUG 21536 / LMG 10740 / 183-1w).